Here is a 179-residue protein sequence, read N- to C-terminus: MAGNREDRKAKVIEVLNKARAMELHAIHQYMNQHYSLDDMDYGELAANMKLIAIDEMRHAENFAERIKELGGEPTTQKEGKVVTGQAVPVIYESDADQEDATIEAYSQFLKVCKEQGDIVTARLFERIIEEEQAHLTYYENIGSHIKNLGDTYLAKIAGTPSSTGTASKGFVTATPAAE.

Positions 1 to 150 (MAGNREDRKA…NIGSHIKNLG (150 aa)) constitute a Ferritin-like diiron domain. Positions 23 and 56 each coordinate Fe cation. M57 contacts Fe-coproporphyrin III. Positions 59, 99, 132, and 135 each coordinate Fe cation.

It belongs to the bacterioferritin family. As to quaternary structure, homooligomer of 24 subunits, arranged as 12 dimers, that are packed together to form an approximately spherical molecule with a central cavity, in which large amounts of iron can be deposited. The cofactor is Fe-coproporphyrin III. It depends on Fe cation as a cofactor.

It catalyses the reaction 4 Fe(2+) + O2 + 4 H(+) = 4 Fe(3+) + 2 H2O. The enzyme catalyses Fe(2+)(in) = Fe(2+)(out). In terms of biological role, iron-storage protein, whose ferroxidase center binds Fe(2+), oxidizes it using dioxygen to Fe(3+), and participates in the subsequent Fe(3+) oxide mineral core formation within the central cavity of the BFR protein shell. The polypeptide is Bacterioferritin (bfr) (Desulfovibrio desulfuricans (strain ATCC 27774 / DSM 6949 / MB)).